Reading from the N-terminus, the 666-residue chain is Endogenous retrovirus group K member 24 Gag polyprotein (666 aa).

G2 is lipidated: N-myristoyl glycine. A disordered region spans residues 165-264; it reads GKGPELVGPS…APPSRQGSEL (100 aa). Over residues 232-247 the composition is skewed to pro residues; sequence GMPPAPQGRAPYPQPP. CCHC-type zinc fingers lie at residues 544–561 and 580–597; these read GKCY…NCPV and DLCP…QCRS. A disordered region spans residues 598-641; sequence KFDKNGQPLSGNEQRGQPQAPQQTGAFPIQPFVPQGFQGQQPPL. Polar residues predominate over residues 604-622; sequence QPLSGNEQRGQPQAPQQTG. Low complexity predominate over residues 624–640; the sequence is FPIQPFVPQGFQGQQPP.

It belongs to the beta type-B retroviral Gag protein family. HERV class-II K(HML-2) gag subfamily. Myristoylation is essential for retroviral assembly. Alteration of the glycine residue leads to a block in the budding of particles and an accumulation of Gag inside the cell. Post-translationally, specific enzymatic cleavages may yield mature proteins.

The protein resides in the cell membrane. The products of the Gag polyproteins of infectious retroviruses perform highly complex orchestrated tasks during the assembly, budding, maturation, and infection stages of the viral replication cycle. During viral assembly, the proteins form membrane associations and self-associations that ultimately result in budding of an immature virion from the infected cell. Gag precursors also function during viral assembly to selectively bind and package two plus strands of genomic RNA. Endogenous Gag proteins may have kept, lost or modified their original function during evolution. The sequence is that of Endogenous retrovirus group K member 24 Gag polyprotein (ERVK-24) from Homo sapiens (Human).